Here is a 612-residue protein sequence, read N- to C-terminus: MPAYRSRTTTHGRNMAGARGLWRATGMKDSDFGKPIIAVVNSFTQFVPGHVHLKDLGQLVAREIEAAGGVAKEFNTIAVDDGIAMGHDGMLYSLPSRELIADSVEYMVNAHCADAMVCISNCDKITPGMLMASLRLNIPTVFVSGGPMEAGKVIMHGKKVALDLVDAMVAAADDKISDEDVAVIERSACPTCGSCSGMFTANSMNCLTEALGLSLPGNGSTLATHSDRKELFLEAGRRVVALAKRYYEQDDVTALPRTIASKGAFENAMALDIAMGGSTNTVLHILAAAHEGEIDFTMDDIDRLSRRVPCLSKVAPAKADVHMEDVHRAGGIMAILGELNRAGLLNADLPTVHAPTLGEALAQWDIAVTDNKAALELFSAAPGGVPTQVAFSQSARWEELDLDREKGVIRDAQHPFSKDGGLAVLKGNLALDGCIVKTAGVDESILKFSGPAKVFESQDSAVKGILSNQVVAGDVVVIRYEGPKGGPGMQEMLYPTSYLKSKGLGKACALITDGRFSGGTSGLSIGHASPEAANGGTIGLVREGDMIDIDIPNRTISLRVDEAELAARREAQNAKGWFPAEKRKRNVTTALKAYAAFATSADRGAVRDLGGK.

D81 provides a ligand contact to Mg(2+). C122 provides a ligand contact to [2Fe-2S] cluster. Mg(2+) contacts are provided by D123 and K124. K124 bears the N6-carboxylysine mark. C195 is a binding site for [2Fe-2S] cluster. E491 is a binding site for Mg(2+). The active-site Proton acceptor is the S517.

It belongs to the IlvD/Edd family. In terms of assembly, homodimer. It depends on [2Fe-2S] cluster as a cofactor. Mg(2+) is required as a cofactor.

The enzyme catalyses (2R)-2,3-dihydroxy-3-methylbutanoate = 3-methyl-2-oxobutanoate + H2O. It catalyses the reaction (2R,3R)-2,3-dihydroxy-3-methylpentanoate = (S)-3-methyl-2-oxopentanoate + H2O. The protein operates within amino-acid biosynthesis; L-isoleucine biosynthesis; L-isoleucine from 2-oxobutanoate: step 3/4. It participates in amino-acid biosynthesis; L-valine biosynthesis; L-valine from pyruvate: step 3/4. Functionally, functions in the biosynthesis of branched-chain amino acids. Catalyzes the dehydration of (2R,3R)-2,3-dihydroxy-3-methylpentanoate (2,3-dihydroxy-3-methylvalerate) into 2-oxo-3-methylpentanoate (2-oxo-3-methylvalerate) and of (2R)-2,3-dihydroxy-3-methylbutanoate (2,3-dihydroxyisovalerate) into 2-oxo-3-methylbutanoate (2-oxoisovalerate), the penultimate precursor to L-isoleucine and L-valine, respectively. The sequence is that of Dihydroxy-acid dehydratase from Rhizobium rhizogenes (strain K84 / ATCC BAA-868) (Agrobacterium radiobacter).